The primary structure comprises 141 residues: Hemoglobin subunit alpha (141 aa).

The Globin domain maps to 1-141; sequence VLSAADKAHV…VSTVLTSKYR (141 aa). At Ser-3 the chain carries Phosphoserine. Lys-7 and Lys-11 each carry N6-succinyllysine. Lys-16 bears the N6-acetyllysine; alternate mark. An N6-succinyllysine; alternate modification is found at Lys-16. Tyr-24 carries the post-translational modification Phosphotyrosine. Ser-35 carries the phosphoserine modification. The residue at position 40 (Lys-40) is an N6-succinyllysine. The residue at position 49 (Ser-49) is a Phosphoserine. His-58 provides a ligand contact to O2. His-87 contacts heme b. Thr-108 carries the phosphothreonine modification. At Ser-124 the chain carries Phosphoserine. Residues Thr-134 and Thr-137 each carry the phosphothreonine modification. Position 138 is a phosphoserine (Ser-138).

This sequence belongs to the globin family. In terms of assembly, heterotetramer of two alpha chains and two beta chains. In terms of tissue distribution, red blood cells.

Its function is as follows. Involved in oxygen transport from the lung to the various peripheral tissues. Hemopressin acts as an antagonist peptide of the cannabinoid receptor CNR1. Hemopressin-binding efficiently blocks cannabinoid receptor CNR1 and subsequent signaling. This Bradypus tridactylus (Pale-throated three-toed sloth) protein is Hemoglobin subunit alpha (HBA).